The following is a 606-amino-acid chain: EPM2A-interacting protein 1 (606 aa).

Serine 147 carries the phosphoserine modification.

Interacts with EPM2A.

The protein resides in the endoplasmic reticulum. This Mus musculus (Mouse) protein is EPM2A-interacting protein 1 (Epm2aip1).